A 362-amino-acid chain; its full sequence is 3-dehydroquinate synthase (362 aa).

Residues 71–76 (DGEQYK), 105–109 (GVVGD), 129–130 (TT), K142, K151, and 169–172 (CLKT) contribute to the NAD(+) site. Zn(2+) is bound by residues E184, H247, and H264.

This sequence belongs to the sugar phosphate cyclases superfamily. Dehydroquinate synthase family. It depends on NAD(+) as a cofactor. The cofactor is Co(2+). Zn(2+) is required as a cofactor.

It is found in the cytoplasm. The catalysed reaction is 7-phospho-2-dehydro-3-deoxy-D-arabino-heptonate = 3-dehydroquinate + phosphate. Its pathway is metabolic intermediate biosynthesis; chorismate biosynthesis; chorismate from D-erythrose 4-phosphate and phosphoenolpyruvate: step 2/7. In terms of biological role, catalyzes the conversion of 3-deoxy-D-arabino-heptulosonate 7-phosphate (DAHP) to dehydroquinate (DHQ). The protein is 3-dehydroquinate synthase of Shigella flexneri.